Here is a 482-residue protein sequence, read N- to C-terminus: Zinc finger protein 385B (482 aa).

The tract at residues 1–105 is required for induction of apoptosis; that stretch reads MNMATFLRGF…TGSACHTTTL (105 aa). Matrin-type zinc fingers lie at residues 34 to 64 and 169 to 199; these read SFCE…RVKQ and ISCN…KVKA. 3 disordered regions span residues 54-75, 189-259, and 268-287; these read DGKS…PPVQ, KGSK…SFLL, and LGAI…SVAE. Positions 106-482 are interaction with p53/TP53; that stretch reads PALVRTPTLM…TPASILFAPY (377 aa). Positions 231-240 are enriched in basic and acidic residues; it reads SSDKSEDKGK. Residues 294 to 328 form a Matrin-type 3 zinc finger; sequence KKLLYCSLCKVAVNSLSQLEAHNTGSKHKTMVEAR. Disordered regions lie at residues 331 to 352 and 378 to 397; these read AGPI…GSKG and HISS…KPKY. Residues 360–390 form a Matrin-type 4 zinc finger; that stretch reads FHCEICDVHVNSEIQLKQHISSRRHKDRVAG.

As to quaternary structure, interacts with p53/TP53; the interaction is direct.

Its subcellular location is the nucleus. Its function is as follows. May play a role in p53/TP53-mediated apoptosis. This Mus musculus (Mouse) protein is Zinc finger protein 385B (Znf385b).